The sequence spans 146 residues: Large ribosomal subunit protein uL16c (146 aa).

This sequence belongs to the universal ribosomal protein uL16 family. As to quaternary structure, part of the 50S ribosomal subunit.

The protein localises to the plastid. The protein resides in the chloroplast. In Angiopteris evecta (Mule's foot fern), this protein is Large ribosomal subunit protein uL16c.